A 1551-amino-acid chain; its full sequence is Dual oxidase 1 (1551 aa).

A signal peptide spans 1–21; it reads MGFCLALTWTFLVGSWTSMGA. The Extracellular portion of the chain corresponds to 22–596; sequence QKPISWEVQR…YFEGSGFGFG (575 aa). The tract at residues 26–593 is peroxidase-like; mediates peroxidase activity; that stretch reads SWEVQRFDGW…MQDYFEGSGF (568 aa). Asn-94 carries N-linked (GlcNAc...) asparagine glycosylation. The disordered stretch occupies residues 197–222; that stretch reads LASGPDPAFPRNAQPPLLMWSAPDPA. N-linked (GlcNAc...) asparagine glycans are attached at residues Asn-342, Asn-354, Asn-461, and Asn-534. Residues 597–617 traverse the membrane as a helical segment; it reads VTIGTLCCFPLVSLLSAWIVA. Topologically, residues 618-1044 are cytoplasmic; sequence RLRKKNFKKL…KRFIENYRRH (427 aa). 3 EF-hand domains span residues 815 to 850, 851 to 886, and 895 to 930; these read PQDM…FMKG, SPEE…FIEI, and QLTE…HDSE. The Ca(2+) site is built by Asp-828, Asp-830, Asn-832, Tyr-834, Glu-839, Asp-864, Asp-866, Asn-868, and Glu-875. The interaction with TXNDC11 stretch occupies residues 956-1248; that stretch reads YISQEKICPS…GSFGLIQLPR (293 aa). A helical transmembrane segment spans residues 1045–1065; the sequence is IGCVAVFYAITGGLFLERAYY. Topologically, residues 1066–1080 are extracellular; the sequence is YAFGAHHMGITDTTR. The helical transmembrane segment at 1081–1101 threads the bilayer; sequence VGIILSRGTAASISFMFSYIL. Residues 1087–1269 enclose the Ferric oxidoreductase domain; it reads RGTAASISFM…YVGDKLVSLS (183 aa). At 1102–1151 the chain is on the cytoplasmic side; the sequence is LTMCRNLITFLRETFLNRYVPFDAAVDFHRLIASTAIVLTVLHSAGHVVN. A helical transmembrane segment spans residues 1152–1172; it reads VYLFSISPLSVLSCLFPGLFH. Residues 1173 to 1188 are Extracellular-facing; it reads NDGSEFPQKYYWWFFQ. Residues 1189-1209 form a helical membrane-spanning segment; it reads TVPGLTGVMLLLVLAIMYVFA. Topologically, residues 1210–1226 are cytoplasmic; sequence SHHFRRHSFRGFWLTHH. The helical transmembrane segment at 1227 to 1247 threads the bilayer; sequence LYILLYVLLIIHGSFGLIQLP. Arg-1248 is a topological domain (extracellular). The chain crosses the membrane as a helical span at residues 1249 to 1269; that stretch reads FHIFFLVPALIYVGDKLVSLS. Positions 1270–1376 constitute an FAD-binding FR-type domain; the sequence is RKKVEISVVK…DGPFGEGHQE (107 aa). Topologically, residues 1270-1551 are cytoplasmic; that stretch reads RKKVEISVVK…THFSHHYENF (282 aa).

The protein in the N-terminal section; belongs to the peroxidase family. In terms of assembly, interacts with TPO and CYBA. Interacts with TXNDC11. Post-translationally, N-glycosylated. In terms of tissue distribution, expressed in thyrocytes (at protein level). Specifically expressed in thyroid.

It localises to the apical cell membrane. It carries out the reaction NADH + O2 + H(+) = H2O2 + NAD(+). It catalyses the reaction NADPH + O2 + H(+) = H2O2 + NADP(+). Its pathway is hormone biosynthesis; thyroid hormone biosynthesis. Peroxidase activity is inhibited by aminobenzohydrazide. The NADPH oxidase activity is calcium-dependent. Generates hydrogen peroxide which is required for the activity of thyroid peroxidase/TPO and lactoperoxidase/LPO. Plays a role in thyroid hormones synthesis and lactoperoxidase-mediated antimicrobial defense at the surface of mucosa. May have its own peroxidase activity through its N-terminal peroxidase-like domain. The chain is Dual oxidase 1 (DUOX1) from Canis lupus familiaris (Dog).